The chain runs to 190 residues: dCTP deaminase, dUMP-forming (190 aa).

Residues 101–106 (KSSLGR), Asp119, 127–129 (TLE), Gln148, Tyr162, Lys170, and Gln174 each bind dCTP. The active-site Proton donor/acceptor is Glu129. The disordered stretch occupies residues 160–190 (HPYGSSRAGSKYQGQRGPTPSRSCQNFIRST). The span at 171 to 190 (YQGQRGPTPSRSCQNFIRST) shows a compositional bias: polar residues.

The protein belongs to the dCTP deaminase family. As to quaternary structure, homotrimer.

It carries out the reaction dCTP + 2 H2O = dUMP + NH4(+) + diphosphate. The protein operates within pyrimidine metabolism; dUMP biosynthesis; dUMP from dCTP: step 1/1. Functionally, bifunctional enzyme that catalyzes both the deamination of dCTP to dUTP and the hydrolysis of dUTP to dUMP without releasing the toxic dUTP intermediate. The sequence is that of dCTP deaminase, dUMP-forming from Mycobacterium bovis (strain ATCC BAA-935 / AF2122/97).